The following is a 212-amino-acid chain: Uracil phosphoribosyltransferase (212 aa).

5-phospho-alpha-D-ribose 1-diphosphate-binding positions include Arg78, Arg103, and Asp130–Ser138. Uracil-binding positions include Ile193 and Gly198 to Ala200. Asp199 provides a ligand contact to 5-phospho-alpha-D-ribose 1-diphosphate.

It belongs to the UPRTase family. Requires Mg(2+) as cofactor.

The enzyme catalyses UMP + diphosphate = 5-phospho-alpha-D-ribose 1-diphosphate + uracil. The protein operates within pyrimidine metabolism; UMP biosynthesis via salvage pathway; UMP from uracil: step 1/1. Its activity is regulated as follows. Allosterically activated by GTP. Catalyzes the conversion of uracil and 5-phospho-alpha-D-ribose 1-diphosphate (PRPP) to UMP and diphosphate. This chain is Uracil phosphoribosyltransferase, found in Bordetella avium (strain 197N).